Reading from the N-terminus, the 443-residue chain is 23S rRNA (uracil(1939)-C(5))-methyltransferase RlmD (443 aa).

Residues 4 to 66 (QNRFDRTSFQ…RHFDEARVVE (63 aa)) form the TRAM domain. Residues cysteine 79, cysteine 85, cysteine 88, and cysteine 167 each coordinate [4Fe-4S] cluster. The S-adenosyl-L-methionine site is built by glutamine 275, phenylalanine 304, asparagine 309, glutamate 325, aspartate 352, and aspartate 373. The active-site Nucleophile is cysteine 399.

The protein belongs to the class I-like SAM-binding methyltransferase superfamily. RNA M5U methyltransferase family. RlmD subfamily.

The catalysed reaction is uridine(1939) in 23S rRNA + S-adenosyl-L-methionine = 5-methyluridine(1939) in 23S rRNA + S-adenosyl-L-homocysteine + H(+). Catalyzes the formation of 5-methyl-uridine at position 1939 (m5U1939) in 23S rRNA. The polypeptide is 23S rRNA (uracil(1939)-C(5))-methyltransferase RlmD (Xylella fastidiosa (strain Temecula1 / ATCC 700964)).